The primary structure comprises 264 residues: Thiazole synthase (264 aa).

Catalysis depends on Lys104, which acts as the Schiff-base intermediate with DXP. 1-deoxy-D-xylulose 5-phosphate contacts are provided by residues Gly165, 191–192, and 213–214; these read AG and NT.

This sequence belongs to the ThiG family. Homotetramer. Forms heterodimers with either ThiH or ThiS.

It is found in the cytoplasm. It carries out the reaction [ThiS sulfur-carrier protein]-C-terminal-Gly-aminoethanethioate + 2-iminoacetate + 1-deoxy-D-xylulose 5-phosphate = [ThiS sulfur-carrier protein]-C-terminal Gly-Gly + 2-[(2R,5Z)-2-carboxy-4-methylthiazol-5(2H)-ylidene]ethyl phosphate + 2 H2O + H(+). It participates in cofactor biosynthesis; thiamine diphosphate biosynthesis. Its function is as follows. Catalyzes the rearrangement of 1-deoxy-D-xylulose 5-phosphate (DXP) to produce the thiazole phosphate moiety of thiamine. Sulfur is provided by the thiocarboxylate moiety of the carrier protein ThiS. In vitro, sulfur can be provided by H(2)S. This is Thiazole synthase from Oleidesulfovibrio alaskensis (strain ATCC BAA-1058 / DSM 17464 / G20) (Desulfovibrio alaskensis).